The following is a 370-amino-acid chain: MSDTVRVELGARAYDVEIGAGLIASAGARIAPLLSRPKVWIVTEETVAALHMDALRAGLDAANIASEALVLPPGEATKSWPHLQRIADWLLSERVERADIVIAFGGGVIGDLAGFAAAIHRRGIRFVQIPTSLLAQVDSSVGGKTGINAPQGKNLIGAFHQPSLVLADIDVLGTLMPRDFLAGYGEVAKYGMLGDAPFFEWLEANGPAMAKGDPALRQEAVRRSVQMKADIVARDETEQGDRALLNLGHTFCHALEAATGYSDRLLHGEGVAIGCALAFELSARLGLCSQEDPSRVRAHLAAMGTRRDLSDIPGDLPDADALITLMGQDKKVVAGQLRFILARGIGHAFVTADVPTDAVKALLTDALAGR.

Residues 107–111 (GVIGD), 131–132 (TS), K144, and K153 each bind NAD(+). Zn(2+) contacts are provided by E186, H249, and H267.

It belongs to the sugar phosphate cyclases superfamily. Dehydroquinate synthase family. It depends on Co(2+) as a cofactor. Zn(2+) is required as a cofactor. The cofactor is NAD(+).

The protein localises to the cytoplasm. It carries out the reaction 7-phospho-2-dehydro-3-deoxy-D-arabino-heptonate = 3-dehydroquinate + phosphate. The protein operates within metabolic intermediate biosynthesis; chorismate biosynthesis; chorismate from D-erythrose 4-phosphate and phosphoenolpyruvate: step 2/7. Catalyzes the conversion of 3-deoxy-D-arabino-heptulosonate 7-phosphate (DAHP) to dehydroquinate (DHQ). This Jannaschia sp. (strain CCS1) protein is 3-dehydroquinate synthase.